Here is a 666-residue protein sequence, read N- to C-terminus: Neopullulanase 1 (666 aa).

The signal sequence occupies residues 1–29 (MIKLLKPMSLSILLVFILSFSFPFPTAKA). Residues Ala-31, Asp-33, Asn-35, Asp-71, Asp-125, Asn-174, Asp-176, Asn-179, Asp-180, Gly-216, and Asp-218 each contribute to the Ca(2+) site. His-296 lines the substrate pocket. Residues Asp-305, Asn-309, Phe-310, Ser-312, and Glu-317 each coordinate Ca(2+). Arg-383 is a substrate binding site. Asp-385 functions as the Nucleophile in the catalytic mechanism. Glu-425 functions as the Proton donor in the catalytic mechanism. Substrate contacts are provided by residues 500 to 501 (HD), Asp-545, and Arg-549.

The protein belongs to the glycosyl hydrolase 13 family. Ca(2+) is required as a cofactor.

It localises to the secreted. The enzyme catalyses Hydrolysis of pullulan to panose (6-alpha-D-glucosylmaltose).. Endohydrolysis of 1,4-alpha-glucosidic linkages in pullulan to form panose. Also hydrolyzes cyclodextrins. The protein is Neopullulanase 1 (tvaI) of Thermoactinomyces vulgaris.